Consider the following 264-residue polypeptide: Exosome complex component Rrp4 (264 aa).

The S1 motif domain maps to 65–137; the sequence is GDNVLGKIVD…EVNNIELTTK (73 aa). The region spanning 147–206 is the KH domain; that stretch reads RGGQIIKITSSKVPRVIGKGGSMINMIKKLTQSRIIVGQNGWIWISSKNPELEKLAIEAI. The span at 244 to 258 shows a compositional bias: acidic residues; it reads SLEEETQEETVMEND. The interval 244–264 is disordered; that stretch reads SLEEETQEETVMENDVEARGP.

This sequence belongs to the RRP4 family. As to quaternary structure, component of the archaeal exosome complex. Forms a trimer of Rrp4 and/or Csl4 subunits. The trimer associates with a hexameric ring-like arrangement composed of 3 Rrp41-Rrp42 heterodimers.

It is found in the cytoplasm. Its function is as follows. Non-catalytic component of the exosome, which is a complex involved in RNA degradation. Increases the RNA binding and the efficiency of RNA degradation. Confers strong poly(A) specificity to the exosome. In Pyrococcus furiosus (strain ATCC 43587 / DSM 3638 / JCM 8422 / Vc1), this protein is Exosome complex component Rrp4.